The chain runs to 162 residues: Protein snakeskin (162 aa).

Residues 2–6 lie on the Cytoplasmic side of the membrane; it reads VSVET. The chain crosses the membrane as a helical span at residues 7–27; the sequence is VGSIFIKALKLIINLVIIFLY. The Extracellular segment spans residues 28–53; the sequence is RWGDGGEFLGIGGTWNLNEEKSADAE. A helical transmembrane segment spans residues 54–74; that stretch reads IVASGVMVGFLIYTGCHTIAF. The Cytoplasmic portion of the chain corresponds to 75–88; that stretch reads AFGTTKHKGELCDT. The chain crosses the membrane as a helical span at residues 89–109; that stretch reads IMNVVGCIMWIAVGGVALHYW. Residues 110-128 lie on the Extracellular side of the membrane; the sequence is KGYMSDEGFLYVNSERQVG. Residues 129–149 form a helical membrane-spanning segment; the sequence is IAMGSLCVIEGALYLLDTVLA. Residues 150–162 lie on the Cytoplasmic side of the membrane; that stretch reads CIHYSKGDTDYTQ.

Forms a complex with Tsp2A and mesh. Interacts with mesh; the interaction may be necessary for the localization of both proteins to the cell apicolateral region.

The protein resides in the apicolateral cell membrane. Its subcellular location is the cell junction. The protein localises to the septate junction. Required for assembly of smooth septate junctions (sSJs), together with mesh and Tsp2A. May be important for barrier function of the midgut epithelium. This is Protein snakeskin from Drosophila melanogaster (Fruit fly).